We begin with the raw amino-acid sequence, 237 residues long: Aliphatic sulfonates import ATP-binding protein SsuB 1 (237 aa).

The 217-residue stretch at 5–221 (LMDIRVEHKA…PRDRRDPLLA (217 aa)) folds into the ABC transporter domain. 38–45 (GPSGCGKS) is a binding site for ATP.

The protein belongs to the ABC transporter superfamily. Aliphatic sulfonates importer (TC 3.A.1.17.2) family. As to quaternary structure, the complex is composed of two ATP-binding proteins (SsuB), two transmembrane proteins (SsuC) and a solute-binding protein (SsuA).

The protein localises to the cell inner membrane. The catalysed reaction is ATP + H2O + aliphatic sulfonate-[sulfonate-binding protein]Side 1 = ADP + phosphate + aliphatic sulfonateSide 2 + [sulfonate-binding protein]Side 1.. In terms of biological role, part of the ABC transporter complex SsuABC involved in aliphatic sulfonates import. Responsible for energy coupling to the transport system. The sequence is that of Aliphatic sulfonates import ATP-binding protein SsuB 1 from Pseudomonas syringae pv. syringae (strain B728a).